Consider the following 955-residue polypeptide: uncharacterized protein (955 aa).

An Importin N-terminal domain is found at 23-90 (ANNYLEEFQK…RNSLLQLFLA (68 aa)).

This is an uncharacterized protein from Schizosaccharomyces pombe (strain 972 / ATCC 24843) (Fission yeast).